We begin with the raw amino-acid sequence, 214 residues long: FMN-dependent NADH:quinone oxidoreductase 1 (214 aa).

Residues 17-19 and 144-147 each bind FMN; these read SWS and SAGG.

Belongs to the azoreductase type 1 family. As to quaternary structure, homodimer. FMN is required as a cofactor.

It catalyses the reaction 2 a quinone + NADH + H(+) = 2 a 1,4-benzosemiquinone + NAD(+). It carries out the reaction N,N-dimethyl-1,4-phenylenediamine + anthranilate + 2 NAD(+) = 2-(4-dimethylaminophenyl)diazenylbenzoate + 2 NADH + 2 H(+). Functionally, quinone reductase that provides resistance to thiol-specific stress caused by electrophilic quinones. Also exhibits azoreductase activity. Catalyzes the reductive cleavage of the azo bond in aromatic azo compounds to the corresponding amines. The protein is FMN-dependent NADH:quinone oxidoreductase 1 of Lactococcus lactis subsp. lactis (strain IL1403) (Streptococcus lactis).